The sequence spans 705 residues: Polyribonucleotide nucleotidyltransferase (705 aa).

The Mg(2+) site is built by D487 and D493. One can recognise a KH domain in the interval 554–613 (PKILTMTINPDKIRDVIGPSGKQINKIIEETGVKIDIEQDGTIFISSTDESGNQKAKKII). The 69-residue stretch at 623–691 (GQLYLGKVKR…KQGRVNLSRK (69 aa)) folds into the S1 motif domain.

Belongs to the polyribonucleotide nucleotidyltransferase family. As to quaternary structure, homodimer. Component of a possible RNA degradosome complex composed of rny, rnjA, rnjB, pnp, pfkA and eno (although rnjA and rnjB's presence is unclear). RNA helicase CshA may also be a member of this complex. Requires Mg(2+) as cofactor.

The protein localises to the cytoplasm. It carries out the reaction RNA(n+1) + phosphate = RNA(n) + a ribonucleoside 5'-diphosphate. Its function is as follows. Involved in mRNA degradation. Catalyzes the phosphorolysis of single-stranded polyribonucleotides processively in the 3'- to 5'-direction. Necessary for competence development in Bacillus subtilis. May be necessary for modification of the srfA transcript (stabilization or translation activation). Involved in processing precursor type I toxin-antitoxin RNAs antitoxin SR4 and SR5 RNAs to their mature forms. The chain is Polyribonucleotide nucleotidyltransferase from Bacillus subtilis (strain 168).